The following is a 134-amino-acid chain: Ribosome-binding factor A (134 aa).

The protein belongs to the RbfA family. Monomer. Binds 30S ribosomal subunits, but not 50S ribosomal subunits or 70S ribosomes.

Its subcellular location is the cytoplasm. One of several proteins that assist in the late maturation steps of the functional core of the 30S ribosomal subunit. Associates with free 30S ribosomal subunits (but not with 30S subunits that are part of 70S ribosomes or polysomes). Required for efficient processing of 16S rRNA. May interact with the 5'-terminal helix region of 16S rRNA. This is Ribosome-binding factor A from Rhizobium leguminosarum bv. trifolii (strain WSM2304).